The sequence spans 239 residues: Sugar fermentation stimulation protein homolog (239 aa).

It belongs to the SfsA family.

The sequence is that of Sugar fermentation stimulation protein homolog from Synechococcus sp. (strain JA-3-3Ab) (Cyanobacteria bacterium Yellowstone A-Prime).